The following is a 704-amino-acid chain: RCC1 domain-containing protein DDB_G0295713 (704 aa).

2 RCC1 repeats span residues 1–48 (MYCW…VKGE) and 69–120 (KNRC…ITDQ). The interval 221–246 (YNNNNNNNNNNNNNNNNNNNNNNNNN) is disordered. Over residues 222-246 (NNNNNNNNNNNNNNNNNNNNNNNNN) the composition is skewed to low complexity. The stretch at 298 to 348 (QNQVYGWGENLNGQLGIEGIDYSTEPILIELPLVEIKHISSGAYHSAFVTN) is one RCC1 3 repeat. Residues 412 to 431 (IKDKNENNETKHTNKNKDNH) are compositionally biased toward basic and acidic residues. The tract at residues 412 to 458 (IKDKNENNETKHTNKNKDNHDDDDESDHSDDDHHDDDDNDKDSQGIN) is disordered. A compositionally biased stretch (acidic residues) spans 432-451 (DDDDESDHSDDDHHDDDDND). Residues 668–698 (IEQTSTQVANSENENENEIEMKMKMKKNEMK) are a coiled coil.

This is RCC1 domain-containing protein DDB_G0295713 from Dictyostelium discoideum (Social amoeba).